The primary structure comprises 544 residues: CTP synthase (544 aa).

Residues 1–265 are amidoligase domain; it reads MTKFIFVTGG…DNIITEQLQL (265 aa). Residue Ser-13 coordinates CTP. UTP is bound at residue Ser-13. Residues 14–19 and Asp-71 each bind ATP; that span reads SLGKGI. Mg(2+) contacts are provided by Asp-71 and Glu-139. CTP is bound by residues 146 to 148, 186 to 191, and Lys-222; these read DIE and KTKPTQ. UTP contacts are provided by residues 186 to 191 and Lys-222; that span reads KTKPTQ. The Glutamine amidotransferase type-1 domain maps to 290–544; the sequence is KIAMVGKYVD…VKAALNNKKA (255 aa). Residue Gly-353 participates in L-glutamine binding. The active-site Nucleophile; for glutamine hydrolysis is the Cys-380. Residues 381-384, Glu-404, and Arg-471 contribute to the L-glutamine site; that span reads LGMQ. Active-site residues include His-517 and Glu-519.

The protein belongs to the CTP synthase family. As to quaternary structure, homotetramer.

The catalysed reaction is UTP + L-glutamine + ATP + H2O = CTP + L-glutamate + ADP + phosphate + 2 H(+). The enzyme catalyses L-glutamine + H2O = L-glutamate + NH4(+). It carries out the reaction UTP + NH4(+) + ATP = CTP + ADP + phosphate + 2 H(+). It participates in pyrimidine metabolism; CTP biosynthesis via de novo pathway; CTP from UDP: step 2/2. With respect to regulation, allosterically activated by GTP, when glutamine is the substrate; GTP has no effect on the reaction when ammonia is the substrate. The allosteric effector GTP functions by stabilizing the protein conformation that binds the tetrahedral intermediate(s) formed during glutamine hydrolysis. Inhibited by the product CTP, via allosteric rather than competitive inhibition. Its function is as follows. Catalyzes the ATP-dependent amination of UTP to CTP with either L-glutamine or ammonia as the source of nitrogen. Regulates intracellular CTP levels through interactions with the four ribonucleotide triphosphates. The chain is CTP synthase from Neisseria meningitidis serogroup C (strain 053442).